The primary structure comprises 279 residues: MADS-box transcription factor PHERES 1 (279 aa).

An MADS-box domain is found at 1–60; it reads MRGKMKLSFIENDSVRKTTFTKRKKGMLKKFNELVTLCGVDACAVIRSPYNSIQEPWPSR.

Interacts with AGL61/DIANA and AGL62. As to expression, male gametophyte, embryo and endosperm.

Its subcellular location is the nucleus. Functionally, probable transcription factor involved in the development of gametophytes and seeds. This chain is MADS-box transcription factor PHERES 1 (PHE1), found in Arabidopsis thaliana (Mouse-ear cress).